The primary structure comprises 38 residues: Photosystem II reaction center protein L (38 aa).

The helical transmembrane segment at 17–37 (SLYWGLLLIFVLAVLFSSYIF) threads the bilayer.

It belongs to the PsbL family. In terms of assembly, PSII is composed of 1 copy each of membrane proteins PsbA, PsbB, PsbC, PsbD, PsbE, PsbF, PsbH, PsbI, PsbJ, PsbK, PsbL, PsbM, PsbT, PsbX, PsbY, PsbZ, Psb30/Ycf12, at least 3 peripheral proteins of the oxygen-evolving complex and a large number of cofactors. It forms dimeric complexes.

The protein resides in the plastid. It localises to the chloroplast thylakoid membrane. In terms of biological role, one of the components of the core complex of photosystem II (PSII). PSII is a light-driven water:plastoquinone oxidoreductase that uses light energy to abstract electrons from H(2)O, generating O(2) and a proton gradient subsequently used for ATP formation. It consists of a core antenna complex that captures photons, and an electron transfer chain that converts photonic excitation into a charge separation. This subunit is found at the monomer-monomer interface and is required for correct PSII assembly and/or dimerization. In Ostreococcus tauri, this protein is Photosystem II reaction center protein L.